Here is a 292-residue protein sequence, read N- to C-terminus: Homoserine kinase (292 aa).

84–94 (PLARGMGSSSA) provides a ligand contact to ATP.

It belongs to the GHMP kinase family. Homoserine kinase subfamily.

It localises to the cytoplasm. It catalyses the reaction L-homoserine + ATP = O-phospho-L-homoserine + ADP + H(+). It functions in the pathway amino-acid biosynthesis; L-threonine biosynthesis; L-threonine from L-aspartate: step 4/5. Its function is as follows. Catalyzes the ATP-dependent phosphorylation of L-homoserine to L-homoserine phosphate. This Thermus thermophilus (strain ATCC BAA-163 / DSM 7039 / HB27) protein is Homoserine kinase.